A 98-amino-acid polypeptide reads, in one-letter code: NADH-ubiquinone oxidoreductase chain 4L (98 aa).

The next 3 helical transmembrane spans lie at 1–21 (MTPT…GLAF), 26–46 (LLSA…ALSL), and 59–79 (APML…ALLV).

It belongs to the complex I subunit 4L family.

It localises to the mitochondrion membrane. It carries out the reaction a ubiquinone + NADH + 5 H(+)(in) = a ubiquinol + NAD(+) + 4 H(+)(out). Its function is as follows. Core subunit of the mitochondrial membrane respiratory chain NADH dehydrogenase (Complex I) which catalyzes electron transfer from NADH through the respiratory chain, using ubiquinone as an electron acceptor. Part of the enzyme membrane arm which is embedded in the lipid bilayer and involved in proton translocation. The polypeptide is NADH-ubiquinone oxidoreductase chain 4L (MT-ND4L) (Gadus morhua (Atlantic cod)).